Reading from the N-terminus, the 606-residue chain is Endonuclease 8-like 3 (606 aa).

Val2 (schiff-base intermediate with DNA; via amino nitrogen) is an active-site residue. Residues 31–51 (ALQGLGGPGSPPAAPGPMGTS) form a disordered region. DNA contacts are provided by Asn194 and Arg273. Residues 249–283 (KVYKRPNCGQCCCKITVCRLGENNRMTYFCPHCQK) form an FPG-type zinc finger. The RanBP2-type zinc finger occupies 319–348 (SEEQWTCEVCTLINKLSSKTCDACLTSRPA). The residue at position 451 (Ser451) is a Phosphoserine. The Zn(2+) site is built by Cys508, His511, Cys534, Cys542, Cys555, His557, Cys580, and Cys588. 2 GRF-type zinc fingers span residues 508–551 (CSKH…ADLS) and 555–597 (CNHG…AQNG).

It belongs to the FPG family.

It is found in the nucleus. Its subcellular location is the chromosome. The enzyme catalyses 2'-deoxyribonucleotide-(2'-deoxyribose 5'-phosphate)-2'-deoxyribonucleotide-DNA = a 3'-end 2'-deoxyribonucleotide-(2,3-dehydro-2,3-deoxyribose 5'-phosphate)-DNA + a 5'-end 5'-phospho-2'-deoxyribonucleoside-DNA + H(+). DNA glycosylase which prefers single-stranded DNA (ssDNA), or partially ssDNA structures such as bubble and fork structures, to double-stranded DNA (dsDNA). Mediates interstrand cross-link repair in response to replication stress: acts by mediating DNA glycosylase activity, cleaving one of the two N-glycosyl bonds comprising the interstrand cross-link, which avoids the formation of a double-strand break but generates an abasic site that is bypassed by translesion synthesis polymerases. In vitro, displays strong glycosylase activity towards the hydantoin lesions spiroiminodihydantoin (Sp) and guanidinohydantoin (Gh) in both ssDNA and dsDNA; also recognizes FapyA, FapyG, 5-OHU, 5-OHC, 5-OHMH, Tg and 8-oxoA lesions in ssDNA. No activity on 8-oxoG detected. Also shows weak DNA-(apurinic or apyrimidinic site) lyase activity. In vivo, appears to be the primary enzyme involved in removing Sp and Gh from ssDNA in neonatal tissues. The sequence is that of Endonuclease 8-like 3 (NEIL3) from Bos taurus (Bovine).